Here is a 98-residue protein sequence, read N- to C-terminus: Small ribosomal subunit protein bS20 (98 aa).

Over residues 1 to 12 the composition is skewed to basic residues; sequence MAPRKPSKKVGP. The interval 1–31 is disordered; that stretch reads MAPRKPSKKVGPQKRPSAEKRVITSKKKQLR.

The protein belongs to the bacterial ribosomal protein bS20 family.

Binds directly to 16S ribosomal RNA. The polypeptide is Small ribosomal subunit protein bS20 (Chlamydia trachomatis serovar L2 (strain ATCC VR-902B / DSM 19102 / 434/Bu)).